A 259-amino-acid polypeptide reads, in one-letter code: Acyl-[acyl-carrier-protein]--UDP-N-acetylglucosamine O-acyltransferase (259 aa).

Belongs to the transferase hexapeptide repeat family. LpxA subfamily. Homotrimer.

The protein localises to the cytoplasm. It carries out the reaction a (3R)-hydroxyacyl-[ACP] + UDP-N-acetyl-alpha-D-glucosamine = a UDP-3-O-[(3R)-3-hydroxyacyl]-N-acetyl-alpha-D-glucosamine + holo-[ACP]. It participates in glycolipid biosynthesis; lipid IV(A) biosynthesis; lipid IV(A) from (3R)-3-hydroxytetradecanoyl-[acyl-carrier-protein] and UDP-N-acetyl-alpha-D-glucosamine: step 1/6. Functionally, involved in the biosynthesis of lipid A, a phosphorylated glycolipid that anchors the lipopolysaccharide to the outer membrane of the cell. This is Acyl-[acyl-carrier-protein]--UDP-N-acetylglucosamine O-acyltransferase from Psychrobacter cryohalolentis (strain ATCC BAA-1226 / DSM 17306 / VKM B-2378 / K5).